Reading from the N-terminus, the 370-residue chain is DNA replication and repair protein RecF (370 aa).

Residue 30–37 coordinates ATP; that stretch reads GENAQGKT.

Belongs to the RecF family.

It localises to the cytoplasm. The RecF protein is involved in DNA metabolism; it is required for DNA replication and normal SOS inducibility. RecF binds preferentially to single-stranded, linear DNA. It also seems to bind ATP. This is DNA replication and repair protein RecF from Bacillus velezensis (strain DSM 23117 / BGSC 10A6 / LMG 26770 / FZB42) (Bacillus amyloliquefaciens subsp. plantarum).